Consider the following 89-residue polypeptide: Small ribosomal subunit protein uS15 (89 aa).

Residues 1–20 (MSITQERKSALIAEHARGKT) are compositionally biased toward basic and acidic residues. Positions 1 to 24 (MSITQERKSALIAEHARGKTDTGS) are disordered.

This sequence belongs to the universal ribosomal protein uS15 family. As to quaternary structure, part of the 30S ribosomal subunit. Forms a bridge to the 50S subunit in the 70S ribosome, contacting the 23S rRNA.

In terms of biological role, one of the primary rRNA binding proteins, it binds directly to 16S rRNA where it helps nucleate assembly of the platform of the 30S subunit by binding and bridging several RNA helices of the 16S rRNA. Functionally, forms an intersubunit bridge (bridge B4) with the 23S rRNA of the 50S subunit in the ribosome. In Maricaulis maris (strain MCS10) (Caulobacter maris), this protein is Small ribosomal subunit protein uS15.